Consider the following 309-residue polypeptide: Aspartate carbamoyltransferase catalytic subunit (309 aa).

2 residues coordinate carbamoyl phosphate: Arg-55 and Thr-56. Lys-85 is an L-aspartate binding site. Residues Arg-106, His-135, and Gln-138 each contribute to the carbamoyl phosphate site. L-aspartate contacts are provided by Arg-168 and Arg-230. The carbamoyl phosphate site is built by Leu-268 and Pro-269.

The protein belongs to the aspartate/ornithine carbamoyltransferase superfamily. ATCase family. As to quaternary structure, heterododecamer (2C3:3R2) of six catalytic PyrB chains organized as two trimers (C3), and six regulatory PyrI chains organized as three dimers (R2).

The catalysed reaction is carbamoyl phosphate + L-aspartate = N-carbamoyl-L-aspartate + phosphate + H(+). Its pathway is pyrimidine metabolism; UMP biosynthesis via de novo pathway; (S)-dihydroorotate from bicarbonate: step 2/3. Its function is as follows. Catalyzes the condensation of carbamoyl phosphate and aspartate to form carbamoyl aspartate and inorganic phosphate, the committed step in the de novo pyrimidine nucleotide biosynthesis pathway. This Wigglesworthia glossinidia brevipalpis protein is Aspartate carbamoyltransferase catalytic subunit.